The primary structure comprises 885 residues: Chromatin structure-remodeling complex protein RSC3 (885 aa).

The segment at residues Cys14–Cys42 is a DNA-binding region (zn(2)-C6 fungal-type). Phosphoserine is present on residues Ser95 and Ser236.

Forms a heteromer with RSC30. Interacts with LDB7 and NPL6. Component of the two forms of the RSC complex composed of at least either RSC1 or RSC2, and ARP7, ARP9, LDB7, NPL6, RSC3, RSC30, RSC4, RSC58, RSC6, RSC8, RSC9, SFH1, STH1, HTL1 and probably RTT102. The complexes interact with histone and histone variant components of centromeric chromatin. Component of a fungal-specific module (HTL1-LDB7-NPL6-RSC3-RSC30) within the RSC complex.

Its subcellular location is the nucleus. Component of the chromatin structure-remodeling complex (RSC), which is involved in transcription regulation and nucleosome positioning. RSC is responsible for the transfer of a histone octamer from a nucleosome core particle to naked DNA. The reaction requires ATP and involves an activated RSC-nucleosome intermediate. Remodeling reaction also involves DNA translocation, DNA twist and conformational change. As a reconfigurer of centromeric and flanking nucleosomes, RSC complex is required both for proper kinetochore function in chromosome segregation and, via a PKC1-dependent signaling pathway, for organization of the cellular cytoskeleton. This subunit is required for transcription of ribosomal protein genes and genes involved in the integrity of the cell wall, and also for proper metaphase progression. Together with HTL1, LDB7, NPL6, RSC30 components, defines a fungal-specific module within the RSC complex that plays a role in many cellular functions including the maintenance of cell wall integrity. The sequence is that of Chromatin structure-remodeling complex protein RSC3 (RSC3) from Saccharomyces cerevisiae (strain ATCC 204508 / S288c) (Baker's yeast).